The following is a 171-amino-acid chain: 3-hydroxydecanoyl-[acyl-carrier-protein] dehydratase (171 aa).

The active site involves H70.

This sequence belongs to the thioester dehydratase family. FabA subfamily. As to quaternary structure, homodimer.

It localises to the cytoplasm. The enzyme catalyses a (3R)-hydroxyacyl-[ACP] = a (2E)-enoyl-[ACP] + H2O. It carries out the reaction (3R)-hydroxydecanoyl-[ACP] = (2E)-decenoyl-[ACP] + H2O. The catalysed reaction is (2E)-decenoyl-[ACP] = (3Z)-decenoyl-[ACP]. It functions in the pathway lipid metabolism; fatty acid biosynthesis. Necessary for the introduction of cis unsaturation into fatty acids. Catalyzes the dehydration of (3R)-3-hydroxydecanoyl-ACP to E-(2)-decenoyl-ACP and then its isomerization to Z-(3)-decenoyl-ACP. Can catalyze the dehydratase reaction for beta-hydroxyacyl-ACPs with saturated chain lengths up to 16:0, being most active on intermediate chain length. The protein is 3-hydroxydecanoyl-[acyl-carrier-protein] dehydratase of Methylobacillus flagellatus (strain ATCC 51484 / DSM 6875 / VKM B-1610 / KT).